The primary structure comprises 339 residues: MVSSQPKYDLIREVGRGSYGLVYEALVRRTGQRVAVKKIRCQAPENVELALREFWALSSIQSQHPNVIHLEECVLQRDGMVQRMLHGSSSVLYLPLVETSLKGEIAFDPRSTYCLWFVMDFCDGGDMNEYILTRRPSRRTNTSFMLQLSSALAFLHKNQIIHRDLKPDNILVCKSRDGVDEPTLKVADFGLSKVCSSSGLNPEEPANVNKSFLSTACGTDFYMAPEVWEGHYTAKADIFALGVILWAMLERITITDTHTKKRLLGGYVQRGAQVVPVGEALLENPKLELLIPVKKKSMNRRMKQLLRQMLSANPQERPDAFQLELKLIQIAFRDFTWET.

One can recognise a Protein kinase domain in the interval 8-332; the sequence is YDLIREVGRG…LELKLIQIAF (325 aa). Residues 14 to 22 and lysine 37 each bind ATP; that span reads VGRGSYGLV. Aspartate 164 acts as the Proton acceptor in catalysis.

It belongs to the protein kinase superfamily. Ser/Thr protein kinase family.

It is found in the nucleus. It carries out the reaction L-seryl-[protein] + ATP = O-phospho-L-seryl-[protein] + ADP + H(+). The enzyme catalyses L-threonyl-[protein] + ATP = O-phospho-L-threonyl-[protein] + ADP + H(+). In Xenopus laevis (African clawed frog), this protein is Serine/threonine-protein kinase pdik1l-B (pdik1-b).